The chain runs to 553 residues: Undecaprenyl phosphate-alpha-4-amino-4-deoxy-L-arabinose arabinosyl transferase 2 (553 aa).

12 helical membrane passes run Ala6–Leu26, Phe85–Leu105, Val115–Tyr135, Val137–Leu157, Met178–Val198, Met208–Leu228, Phe261–Gly281, Glu295–Gly315, Leu317–Val337, Gly352–Val372, Trp386–Leu406, and His410–Pro430.

This sequence belongs to the glycosyltransferase 83 family.

Its subcellular location is the cell inner membrane. The enzyme catalyses 4-amino-4-deoxy-alpha-L-arabinopyranosyl di-trans,octa-cis-undecaprenyl phosphate + lipid IVA = lipid IIA + di-trans,octa-cis-undecaprenyl phosphate.. It functions in the pathway lipopolysaccharide metabolism; 4-amino-4-deoxy-beta-L-arabinose-lipid A biosynthesis. Functionally, catalyzes the transfer of the L-Ara4N moiety of the glycolipid undecaprenyl phosphate-alpha-L-Ara4N to lipid A. The modified arabinose is attached to lipid A and is required for resistance to polymyxin and cationic antimicrobial peptides. The chain is Undecaprenyl phosphate-alpha-4-amino-4-deoxy-L-arabinose arabinosyl transferase 2 from Proteus mirabilis (strain HI4320).